We begin with the raw amino-acid sequence, 314 residues long: Homoserine kinase (314 aa).

Position 95-105 (95-105 (PHSRGLGSSAS)) interacts with ATP.

This sequence belongs to the GHMP kinase family. Homoserine kinase subfamily.

Its subcellular location is the cytoplasm. It carries out the reaction L-homoserine + ATP = O-phospho-L-homoserine + ADP + H(+). It participates in amino-acid biosynthesis; L-threonine biosynthesis; L-threonine from L-aspartate: step 4/5. Functionally, catalyzes the ATP-dependent phosphorylation of L-homoserine to L-homoserine phosphate. The protein is Homoserine kinase of Mycobacterium ulcerans (strain Agy99).